We begin with the raw amino-acid sequence, 383 residues long: 3-phytase (383 aa).

The first 26 residues, 1 to 26 (MNHSKTLLLTAAAGLMLTCGAVSSQA), serve as a signal peptide directing secretion. The propeptide occupies 27–30 (KHKL). A BPP domain is found at 31-362 (SDPYHFTVNA…VPWERIADKI (332 aa)). Positions 364-383 (FHPQVNKQVDPRKMTDRSGK) are disordered. The span at 372–383 (VDPRKMTDRSGK) shows a compositional bias: basic and acidic residues.

It localises to the secreted. The enzyme catalyses 1D-myo-inositol hexakisphosphate + H2O = 1D-myo-inositol 1,2,4,5,6-pentakisphosphate + phosphate. This is 3-phytase (phy) from Bacillus sp. (strain DS11).